A 92-amino-acid chain; its full sequence is Small ribosomal subunit protein uS17 (92 aa).

This sequence belongs to the universal ribosomal protein uS17 family. As to quaternary structure, part of the 30S ribosomal subunit.

One of the primary rRNA binding proteins, it binds specifically to the 5'-end of 16S ribosomal RNA. The chain is Small ribosomal subunit protein uS17 from Mycoplasma mobile (strain ATCC 43663 / 163K / NCTC 11711) (Mesomycoplasma mobile).